The following is a 316-amino-acid chain: Phospho-N-acetylmuramoyl-pentapeptide-transferase (316 aa).

The next 10 helical transmembrane spans lie at 5-25 (IILA…LFIP), 49-69 (GTPT…TLIF), 76-96 (LAIL…DDFL), 116-136 (FLLA…EVIF), 141-161 (TTID…VGTV), 172-192 (GLAA…ALFL), 195-212 (ITYG…LGFL), 221-241 (IFMG…AAVL), 244-264 (LPLI…SVII), and 296-316 (VVYA…YSLS).

This sequence belongs to the glycosyltransferase 4 family. MraY subfamily. The cofactor is Mg(2+).

It localises to the cell membrane. The enzyme catalyses UDP-N-acetyl-alpha-D-muramoyl-L-alanyl-gamma-D-glutamyl-meso-2,6-diaminopimeloyl-D-alanyl-D-alanine + di-trans,octa-cis-undecaprenyl phosphate = di-trans,octa-cis-undecaprenyl diphospho-N-acetyl-alpha-D-muramoyl-L-alanyl-D-glutamyl-meso-2,6-diaminopimeloyl-D-alanyl-D-alanine + UMP. It participates in cell wall biogenesis; peptidoglycan biosynthesis. In terms of biological role, catalyzes the initial step of the lipid cycle reactions in the biosynthesis of the cell wall peptidoglycan: transfers peptidoglycan precursor phospho-MurNAc-pentapeptide from UDP-MurNAc-pentapeptide onto the lipid carrier undecaprenyl phosphate, yielding undecaprenyl-pyrophosphoryl-MurNAc-pentapeptide, known as lipid I. In Thermoanaerobacter pseudethanolicus (strain ATCC 33223 / 39E) (Clostridium thermohydrosulfuricum), this protein is Phospho-N-acetylmuramoyl-pentapeptide-transferase.